The sequence spans 353 residues: Heterogeneous nuclear ribonucleoproteins A2/B1 (353 aa).

The residue at position 1 (Met-1) is an N-acetylmethionine. Residue Thr-4 is modified to Phosphothreonine. The short motif at 9–15 (PLERKKR) is the Nuclear localization signal element. 2 RRM domains span residues 21–104 (RKLF…ESGK) and 112–191 (KKLF…LSRQ). Residue Lys-22 forms a Glycyl lysine isopeptide (Lys-Gly) (interchain with G-Cter in SUMO2) linkage. Phosphoserine is present on Ser-29. Omega-N-methylarginine is present on Arg-38. Ser-85 bears the Phosphoserine mark. Lys-104 bears the N6,N6-dimethyllysine; alternate mark. Lys-104 is covalently cross-linked (Glycyl lysine isopeptide (Lys-Gly) (interchain with G-Cter in SUMO2); alternate). Glycyl lysine isopeptide (Lys-Gly) (interchain with G-Cter in SUMO2) cross-links involve residues Lys-112, Lys-120, and Lys-137. Residue Thr-140 is modified to Phosphothreonine. Ser-149 carries the post-translational modification Phosphoserine. Lys-152 participates in a covalent cross-link: Glycyl lysine isopeptide (Lys-Gly) (interchain with G-Cter in SUMO2). Thr-159 carries the phosphothreonine modification. Residues Lys-168 and Lys-173 each participate in a glycyl lysine isopeptide (Lys-Gly) (interchain with G-Cter in SUMO2); alternate cross-link. N6-acetyllysine; alternate occurs at positions 168 and 173. Position 176 is a phosphothreonine (Thr-176). Lys-186 participates in a covalent cross-link: Glycyl lysine isopeptide (Lys-Gly) (interchain with G-Cter in SUMO2). Phosphoserine occurs at positions 189 and 201. The segment at 193–353 (MQEVQSSRSG…SGGYGGRSRY (161 aa)) is disordered. Positions 202–223 (GRGGNFGFGDSRGGGGNFGPGP) are enriched in gly residues. Arg-203 carries the asymmetric dimethylarginine; alternate modification. At Arg-203 the chain carries Dimethylated arginine; alternate. Arg-203 carries the post-translational modification Omega-N-methylarginine; alternate. Ser-212 bears the Phosphoserine mark. At Arg-213 the chain carries Asymmetric dimethylarginine; alternate. At Arg-213 the chain carries Dimethylated arginine; alternate. Omega-N-methylarginine; alternate is present on Arg-213. Ser-225 is modified (phosphoserine). Position 228 is an omega-N-methylarginine (Arg-228). 2 positions are modified to phosphoserine: Ser-231 and Ser-236. Residue Arg-238 is modified to Omega-N-methylarginine. Ser-259 is modified (phosphoserine). Arg-266 is modified (asymmetric dimethylarginine; alternate). An Omega-N-methylarginine; alternate modification is found at Arg-266. The nuclear targeting sequence stretch occupies residues 308-347 (QQPSNYGPMKSGNFGGSRNMGGPYGGGNYGPGGSGGSGGY). Positions 320–353 (NFGGSRNMGGPYGGGNYGPGGSGGSGGYGGRSRY) are enriched in gly residues. Ser-324 carries the post-translational modification Phosphoserine. Arg-325 carries the post-translational modification Omega-N-methylarginine. A Phosphotyrosine modification is found at Tyr-331. A phosphoserine mark is found at Ser-341 and Ser-344. Residue Tyr-347 is modified to Phosphotyrosine. At Arg-350 the chain carries Omega-N-methylarginine.

As to quaternary structure, homodimer; dimerization is required for nucleocytoplasmic translocation. Identified in the spliceosome C complex. Identified in a IGF2BP1-dependent mRNP granule complex containing untranslated mRNAs. Interacts with IGF2BP1. Interacts with C9orf72. Interacts with DGCR8. Interacts with TARDBP. Interacts with CKAP5. Interacts with TBK1. Interacts with STING1. Interacts with SRC. Interacts with PPIA/CYPA. Interacts (via C-terminus) with FAM76B; the interaction results in retention of HNRNPA2B1 in the nucleus and inhibition of the NF-kappa-B-mediated inflammatory pathway. Interacts with NF-kappa-B inhibitors NFKBIA and NFKBIE; the interaction may be mediated by the RRM2 domain of HNRNPA2B1, and HNRNPA2B1 may interact simultaneously with FAM76B and either NFKBIA or NFKBIE to form a complex. In terms of processing, asymmetric dimethylation at Arg-266 constitutes the major methylation site. According to a report, methylation affects subcellular location and promotes nuclear localization. According to another report, methylation at Arg-266 does not influence nucleocytoplasmic shuttling. Post-translationally, sumoylated in exosomes, promoting miRNAs-binding. In terms of tissue distribution, in the brain, isoform A2 and isoform B1 are abundant in large ganglion-type neurons, such as Purkinje cells, and are less abundant in neighboring glia cells. Isoform A2 is more abundant than isoform B1 in brain. In testis, isoform A2 and isoform B1 are present in spermatogonia and spermatocytes, but not in spermatids or sperm. Isoform A2 is more abundant in the adrenal medulla than in the cortical cells. Isoform B1 is found in both adrenal medulla and cortical cells. Isoform A2 is more abundant than isoform B1 in the adrenal gland. Isoform A2 and isoform B1 are both detected in pancreas and kidney, and at lower levels in heart and lung. Isoform B1 is more abundant than isoform A2 in heart, lung and intestine (at protein level). Isoform A2b and isoform B1b are testis-specific.

The protein localises to the nucleus. Its subcellular location is the cytoplasm. It is found in the nucleoplasm. The protein resides in the cytoplasmic granule. It localises to the secreted. The protein localises to the extracellular exosome. Functionally, heterogeneous nuclear ribonucleoprotein (hnRNP) that associates with nascent pre-mRNAs, packaging them into hnRNP particles. The hnRNP particle arrangement on nascent hnRNA is non-random and sequence-dependent and serves to condense and stabilize the transcripts and minimize tangling and knotting. Packaging plays a role in various processes such as transcription, pre-mRNA processing, RNA nuclear export, subcellular location, mRNA translation and stability of mature mRNAs. Forms hnRNP particles with at least 20 other different hnRNP and heterogeneous nuclear RNA in the nucleus. Involved in transport of specific mRNAs to the cytoplasm in oligodendrocytes and neurons: acts by specifically recognizing and binding the A2RE (21 nucleotide hnRNP A2 response element) or the A2RE11 (derivative 11 nucleotide oligonucleotide) sequence motifs present on some mRNAs, and promotes their transport to the cytoplasm. Specifically binds single-stranded telomeric DNA sequences, protecting telomeric DNA repeat against endonuclease digestion. Also binds other RNA molecules, such as primary miRNA (pri-miRNAs): acts as a nuclear 'reader' of the N6-methyladenosine (m6A) mark by specifically recognizing and binding a subset of nuclear m6A-containing pri-miRNAs. Binding to m6A-containing pri-miRNAs promotes pri-miRNA processing by enhancing binding of DGCR8 to pri-miRNA transcripts. Involved in miRNA sorting into exosomes following sumoylation, possibly by binding (m6A)-containing pre-miRNAs. Acts as a regulator of efficiency of mRNA splicing, possibly by binding to m6A-containing pre-mRNAs. Plays a role in the splicing of pyruvate kinase PKM by binding repressively to sequences flanking PKM exon 9, inhibiting exon 9 inclusion and resulting in exon 10 inclusion and production of the PKM M2 isoform. Also plays a role in the activation of the innate immune response. Mechanistically, senses the presence of viral DNA in the nucleus, homodimerizes and is demethylated by JMJD6. In turn, translocates to the cytoplasm where it activates the TBK1-IRF3 pathway, leading to interferon alpha/beta production. This Rattus norvegicus (Rat) protein is Heterogeneous nuclear ribonucleoproteins A2/B1.